We begin with the raw amino-acid sequence, 512 residues long: Glutathione-binding protein GsiB (512 aa).

The signal sequence occupies residues Met-1–Ala-26.

It belongs to the bacterial solute-binding protein 5 family. In terms of assembly, the complex is composed of two ATP-binding proteins (GsiA), two transmembrane proteins (GsiC and GsiD) and a solute-binding protein (GsiB).

The protein resides in the periplasm. Its function is as follows. Part of the ABC transporter complex GsiABCD involved in glutathione import. Binds glutathione. In Salmonella typhimurium (strain LT2 / SGSC1412 / ATCC 700720), this protein is Glutathione-binding protein GsiB.